The chain runs to 639 residues: Mediator of RNA polymerase II transcription subunit 17 (639 aa).

It belongs to the Mediator complex subunit 17 family. In terms of assembly, component of the Mediator complex.

Its subcellular location is the nucleus. Its function is as follows. Component of the Mediator complex, a coactivator involved in the regulated transcription of nearly all RNA polymerase II-dependent genes. Mediator functions as a bridge to convey information from gene-specific regulatory proteins to the basal RNA polymerase II transcription machinery. Mediator is recruited to promoters by direct interactions with regulatory proteins and serves as a scaffold for the assembly of a functional preinitiation complex with RNA polymerase II and the general transcription factors. The sequence is that of Mediator of RNA polymerase II transcription subunit 17 (med17) from Xenopus tropicalis (Western clawed frog).